The following is a 566-amino-acid chain: Liver carboxylesterase 1 (566 aa).

Residues 1-18 (MWLRALVLATLAAFTAWG) form the signal peptide. N-linked (GlcNAc...) asparagine glycosylation occurs at asparagine 79. An intrachain disulfide couples cysteine 87 to cysteine 116. Residue serine 221 is the Acyl-ester intermediate of the active site. A disulfide bridge links cysteine 274 with cysteine 285. Glutamate 354 functions as the Charge relay system in the catalytic mechanism. A Phosphoserine modification is found at serine 379. Histidine 467 serves as the catalytic Charge relay system.

Belongs to the type-B carboxylesterase/lipase family. In terms of assembly, homotrimer and homohexamer. Binds to beta-glucuronidase.

It localises to the endoplasmic reticulum lumen. It is found in the cytoplasm. The protein localises to the lipid droplet. It catalyses the reaction a carboxylic ester + H2O = an alcohol + a carboxylate + H(+). The catalysed reaction is cholesteryl (9Z-octadecenoate) + H2O = cholesterol + (9Z)-octadecenoate + H(+). The enzyme catalyses 2-(5Z,8Z,11Z,14Z-eicosatetraenoyl)-glycerol + H2O = glycerol + (5Z,8Z,11Z,14Z)-eicosatetraenoate + H(+). It carries out the reaction prostaglandin E2 1-glyceryl ester + H2O = prostaglandin E2 + glycerol + H(+). It catalyses the reaction a cholesterol ester + H2O = cholesterol + a fatty acid + H(+). The catalysed reaction is prostaglandin F2alpha 1-glyceryl ester + H2O = prostaglandin F2alpha + glycerol + H(+). In terms of biological role, involved in the detoxification of xenobiotics and in the activation of ester and amide prodrugs. Hydrolyzes aromatic and aliphatic esters, but has no catalytic activity toward amides or a fatty acyl-CoA ester. Displays fatty acid ethyl ester synthase activity, catalyzing the ethyl esterification of oleic acid to ethyloleate. Converts monoacylglycerides to free fatty acids and glycerol. Hydrolyzes of 2-arachidonoylglycerol and prostaglandins. Hydrolyzes cellular cholesteryl esters to free cholesterols and promotes reverse cholesterol transport (RCT) by facilitating both the initial and final steps in the process. First of all, allows free cholesterol efflux from macrophages to extracellular cholesterol acceptors and secondly, releases free cholesterol from lipoprotein-delivered cholesteryl esters in the liver for bile acid synthesis or direct secretion into the bile. In Macaca fascicularis (Crab-eating macaque), this protein is Liver carboxylesterase 1.